A 292-amino-acid polypeptide reads, in one-letter code: AT-hook motif nuclear-localized protein 23 (292 aa).

Positions 23–100 (HLHHNSSSDD…SKNKPKPPVI (78 aa)) are disordered. Positions 60–79 (SGGGSGSSGGGGGHGGGGDV) are enriched in gly residues. A DNA-binding region (a.T hook) is located at residues 82-94 (RRPRGRPPGSKNK). In terms of domain architecture, PPC spans 106–242 (ANTLRAHILE…EDEQQQQLGG (137 aa)).

It localises to the nucleus. In terms of biological role, transcription factor that specifically binds AT-rich DNA sequences related to the nuclear matrix attachment regions (MARs). In Arabidopsis thaliana (Mouse-ear cress), this protein is AT-hook motif nuclear-localized protein 23.